We begin with the raw amino-acid sequence, 106 residues long: Transcription and mRNA export factor SUS1 (106 aa).

The protein belongs to the ENY2 family. Component of the nuclear pore complex (NPC)-associated TREX-2 complex (transcription and export complex 2), composed of at least SUS1, SAC3, THP1, SEM1, and CDC31. TREX-2 contains 2 SUS1 chains. The TREX-2 complex interacts with the nucleoporin NUP1. Component of the 1.8 MDa SAGA transcription coactivator-HAT complex. SAGA is built of 5 distinct domains with specialized functions. Within the SAGA complex, SUS1, SGF11, SGF73 and UBP8 form an additional subcomplex of SAGA called the DUB module (deubiquitination module). Interacts directly with THP1, SAC3, SGF11, and with the RNA polymerase II.

It localises to the nucleus. The protein localises to the nucleoplasm. The protein resides in the cytoplasm. Its subcellular location is the P-body. Involved in mRNA export coupled transcription activation by association with both the TREX-2 and the SAGA complexes. At the promoters, SAGA is required for recruitment of the basal transcription machinery. It influences RNA polymerase II transcriptional activity through different activities such as TBP interaction and promoter selectivity, interaction with transcription activators, and chromatin modification through histone acetylation and deubiquitination. Within the SAGA complex, participates in a subcomplex required for deubiquitination of H2B and for the maintenance of steady-state H3 methylation levels. The TREX-2 complex functions in docking export-competent ribonucleoprotein particles (mRNPs) to the nuclear entrance of the nuclear pore complex (nuclear basket). TREX-2 participates in mRNA export and accurate chromatin positioning in the nucleus by tethering genes to the nuclear periphery. May also be involved in cytoplasmic mRNA decay by interaction with components of P-bodies. The chain is Transcription and mRNA export factor SUS1 from Mycosarcoma maydis (Corn smut fungus).